The sequence spans 146 residues: NADH-quinone oxidoreductase subunit A (146 aa).

The next 3 helical transmembrane spans lie at phenylalanine 14–phenylalanine 34, phenylalanine 66–tryptophan 86, and valine 96–valine 116.

The protein belongs to the complex I subunit 3 family. As to quaternary structure, NDH-1 is composed of 13 different subunits. Subunits NuoA, H, J, K, L, M, N constitute the membrane sector of the complex.

It localises to the cell inner membrane. The enzyme catalyses a quinone + NADH + 5 H(+)(in) = a quinol + NAD(+) + 4 H(+)(out). Functionally, NDH-1 shuttles electrons from NADH, via FMN and iron-sulfur (Fe-S) centers, to quinones in the respiratory chain. The immediate electron acceptor for the enzyme in this species is believed to be ubiquinone. Couples the redox reaction to proton translocation (for every two electrons transferred, four hydrogen ions are translocated across the cytoplasmic membrane), and thus conserves the redox energy in a proton gradient. The chain is NADH-quinone oxidoreductase subunit A from Serratia proteamaculans (strain 568).